Reading from the N-terminus, the 370-residue chain is 3-isopropylmalate dehydrogenase (370 aa).

Residues Arg99, Arg109, Arg137, and Asp227 each contribute to the substrate site. The Mg(2+) site is built by Asp227, Asp251, and Asp255. Residue 290-302 coordinates NAD(+); sequence GSAPDIAGQDKAN.

It belongs to the isocitrate and isopropylmalate dehydrogenases family. LeuB type 1 subfamily. In terms of assembly, homodimer. Mg(2+) is required as a cofactor. The cofactor is Mn(2+).

The protein localises to the cytoplasm. It carries out the reaction (2R,3S)-3-isopropylmalate + NAD(+) = 4-methyl-2-oxopentanoate + CO2 + NADH. It functions in the pathway amino-acid biosynthesis; L-leucine biosynthesis; L-leucine from 3-methyl-2-oxobutanoate: step 3/4. In terms of biological role, catalyzes the oxidation of 3-carboxy-2-hydroxy-4-methylpentanoate (3-isopropylmalate) to 3-carboxy-4-methyl-2-oxopentanoate. The product decarboxylates to 4-methyl-2 oxopentanoate. In Rhodospirillum rubrum (strain ATCC 11170 / ATH 1.1.1 / DSM 467 / LMG 4362 / NCIMB 8255 / S1), this protein is 3-isopropylmalate dehydrogenase.